Reading from the N-terminus, the 619-residue chain is Very-long-chain aldehyde decarbonylase GL1-4 (619 aa).

5 helical membrane-spanning segments follow: residues 45-65 (IAFS…QIWI), 94-114 (GWDD…LAMP), 126-146 (GAVV…YWFH), 178-198 (FAEH…TIYL), and 325-345 (AWYM…AWIY). The Fatty acid hydroxylase domain maps to 138–272 (VEFLYYWFHR…MPFYDYIYNT (135 aa)).

It belongs to the sterol desaturase family. Homodimer. As to expression, expressed ubiquitously at low levels, with higher accumulation in developing panicles, shoots and flag leaves.

It localises to the endoplasmic reticulum membrane. It carries out the reaction a long-chain fatty aldehyde + 2 NADPH + O2 + H(+) = a long-chain alkane + formate + 2 NADP(+) + H2O. Its function is as follows. Aldehyde decarbonylase involved in the conversion of aldehydes to alkanes. Core component of a very-long-chain alkane synthesis complex. The polypeptide is Very-long-chain aldehyde decarbonylase GL1-4 (Oryza sativa subsp. japonica (Rice)).